A 788-amino-acid chain; its full sequence is IQ motif and ubiquitin-like domain-containing protein (788 aa).

Residues 1–89 form a disordered region; sequence MSDPEEERVA…SLGSASGSQD (89 aa). The segment covering 7–20 has biased composition (basic and acidic residues); sequence ERVADSTAHYEEAG. Over residues 31–54 the composition is skewed to acidic residues; that stretch reads EAEGSDVMPEQDDEVQELTTESEE. Positions 68–78 are enriched in basic and acidic residues; that stretch reads KSDDSKPREEV. Positions 80 to 89 are enriched in polar residues; it reads SLGSASGSQD. Positions 127 to 203 constitute a Ubiquitin-like domain; sequence ATVKIVLIPA…VQVEVFSTLP (77 aa). Residues 334–363 form the IQ domain; that stretch reads RLHAVIVIQTSYRRWHAKRYVESLRKQKKL.

Component of the axonemal radial spoke 1 (RS1) complex, at least composed of spoke head proteins RSPH1, RSPH3B, RSPH9 and the cilia-specific component RSPH4A or sperm-specific component RSPH6A, spoke stalk proteins RSPH14, DNAJB13, DYDC1, ROPN1L and NME5, and the anchor protein IQUB. Does not appear to be part of radial spoke complexes 2 or 3 (RS2 or RS3). Interacts with CALM1. Interacts with DNAJB13. Interacts with DYNLL2. Interacts with NME5. Interacts with RSPH3. Interacts with RSPH9. Interacts with ZMYND10. Interacts with calmodulin; the interaction occurs in conditions of low but not high calcium. In terms of tissue distribution, expressed in the flagellum of sperm cells and cilia of tracheal epithelial cells (at protein level). High expression in testis, also present in brain and lung.

Its subcellular location is the cytoplasm. It localises to the cytoskeleton. The protein localises to the flagellum axoneme. It is found in the cell projection. The protein resides in the cilium. In terms of biological role, anchors the radial spoke 1 (RS1) complex to the A microtubule of outer doublet microtubules in axonemes. The triple radial spokes (RS1, RS2 and RS3) are required to modulate beating of the sperm flagellum. May play a role in inhibiting signaling via MAPK1/ERK2 and MAPK3/ERK1. Additionally, may play a role in the functioning of cilia. Not required for the functioning of tracheal or ependymal cilia. The sequence is that of IQ motif and ubiquitin-like domain-containing protein (Iqub) from Mus musculus (Mouse).